The sequence spans 179 residues: uncharacterized protein (179 aa).

This is an uncharacterized protein from Salmonella typhimurium (strain LT2 / SGSC1412 / ATCC 700720).